The primary structure comprises 295 residues: Phosphoribosylaminoimidazole-succinocarboxamide synthase (295 aa).

The protein belongs to the SAICAR synthetase family.

The enzyme catalyses 5-amino-1-(5-phospho-D-ribosyl)imidazole-4-carboxylate + L-aspartate + ATP = (2S)-2-[5-amino-1-(5-phospho-beta-D-ribosyl)imidazole-4-carboxamido]succinate + ADP + phosphate + 2 H(+). It functions in the pathway purine metabolism; IMP biosynthesis via de novo pathway; 5-amino-1-(5-phospho-D-ribosyl)imidazole-4-carboxamide from 5-amino-1-(5-phospho-D-ribosyl)imidazole-4-carboxylate: step 1/2. The chain is Phosphoribosylaminoimidazole-succinocarboxamide synthase from Corynebacterium ammoniagenes (Brevibacterium ammoniagenes).